Reading from the N-terminus, the 432-residue chain is Adenosylhomocysteinase (432 aa).

Threonine 56, aspartate 131, and glutamate 156 together coordinate substrate. 157–159 lines the NAD(+) pocket; that stretch reads TTT. Lysine 186 and aspartate 190 together coordinate substrate. Residues 222–227, glutamate 243, asparagine 248, 299–301, asparagine 346, histidine 353, lysine 426, 426–430, and tyrosine 430 contribute to the NAD(+) site; these read GDVGKG, IGH, and KPDHY.

Belongs to the adenosylhomocysteinase family. In terms of assembly, interacts with AhcyL1; the interaction may negatively regulate Ahcy catalytic activity. Requires NAD(+) as cofactor.

The enzyme catalyses S-adenosyl-L-homocysteine + H2O = L-homocysteine + adenosine. The protein operates within amino-acid biosynthesis; L-homocysteine biosynthesis; L-homocysteine from S-adenosyl-L-homocysteine: step 1/1. Its function is as follows. Adenosylhomocysteine is a competitive inhibitor of S-adenosyl-L-methionine-dependent methyl transferase reactions; therefore adenosylhomocysteinase may play a key role in the control of methylations via regulation of the intracellular concentration of adenosylhomocysteine. In Drosophila melanogaster (Fruit fly), this protein is Adenosylhomocysteinase.